We begin with the raw amino-acid sequence, 122 residues long: UPF0102 protein CA_C1763 (122 aa).

The protein belongs to the UPF0102 family.

This chain is UPF0102 protein CA_C1763, found in Clostridium acetobutylicum (strain ATCC 824 / DSM 792 / JCM 1419 / IAM 19013 / LMG 5710 / NBRC 13948 / NRRL B-527 / VKM B-1787 / 2291 / W).